A 269-amino-acid chain; its full sequence is 5'-nucleotidase SurE (269 aa).

A divalent metal cation-binding residues include aspartate 11, aspartate 12, serine 42, and asparagine 90.

This sequence belongs to the SurE nucleotidase family. A divalent metal cation is required as a cofactor.

It localises to the cytoplasm. It catalyses the reaction a ribonucleoside 5'-phosphate + H2O = a ribonucleoside + phosphate. In terms of biological role, nucleotidase that shows phosphatase activity on nucleoside 5'-monophosphates. In Haloarcula marismortui (strain ATCC 43049 / DSM 3752 / JCM 8966 / VKM B-1809) (Halobacterium marismortui), this protein is 5'-nucleotidase SurE.